Reading from the N-terminus, the 246-residue chain is MTTIAQSVFCFLAGFFNFFLLYFRKTSRAYCKYQVVKYHSNIPMSPLTTHRLLTVKRKILVLDLDETLIHSHHDGVLRQTVKPGTPSDFTIRVVIDRHPVKFSVHERPHVDYFLSVVSQWYELVVFTASMEVYGTSVADRLDRGRGILKRRYFRQHCTMEVGGYTKDLSAIHPDLSSICILDNSPGAYRKFPHNAIPIPSWFSDPNDTCLLNLLPFLDALRFTSDVRSVLSRNMQALPETQSVQYY.

The helical transmembrane segment at Thr3–Phe23 threads the bilayer. Positions Leu53 to Leu220 constitute an FCP1 homology domain.

Belongs to the dullard family.

Its subcellular location is the membrane. It is found in the nucleus envelope. It catalyses the reaction O-phospho-L-seryl-[protein] + H2O = L-seryl-[protein] + phosphate. It carries out the reaction O-phospho-L-threonyl-[protein] + H2O = L-threonyl-[protein] + phosphate. Its function is as follows. Serine/threonine protein phosphatase that may dephosphorylate and activate lipin-like phosphatases. Lipins are phosphatidate phosphatases that catalyze the conversion of phosphatidic acid to diacylglycerol and control the metabolism of fatty acids at different levels. May indirectly modulate the lipid composition of nuclear and/or endoplasmic reticulum membranes and be required for proper nuclear membrane morphology and/or dynamics. Contributes to closure of nuclear envelope (NE) holes and prevents excess nuclear membranes after meiosis and mitosis, possibly through spatial regulation of lipin. May limit the production of endoplasmic reticulum (ER) sheets proximal to the NE to prevent the ER membranes that feed into NE openings from invading the nuclear interior and thereby restrict nuclear transport to nuclear pore complexes (NPCs). May also indirectly regulate the production of lipid droplets and triacylglycerol. This Caenorhabditis elegans protein is CTD nuclear envelope phosphatase 1 homolog (cnep-1).